The following is a 24-amino-acid chain: Ranatuerin-4 (24 aa).

A disulfide bridge connects residues Cys-18 and Cys-24.

The protein belongs to the frog skin active peptide (FSAP) family. Ranatuerin subfamily. In terms of tissue distribution, expressed by the skin glands.

The protein resides in the secreted. Functionally, antibacterial activity against Gram-positive bacterium S.aureus (MIC=55 uM). Shows no detectable hemolytic activity towards human erythrocytes. This is Ranatuerin-4 from Aquarana catesbeiana (American bullfrog).